A 649-amino-acid polypeptide reads, in one-letter code: DNA mismatch repair protein MutL (649 aa).

It belongs to the DNA mismatch repair MutL/HexB family.

In terms of biological role, this protein is involved in the repair of mismatches in DNA. It is required for dam-dependent methyl-directed DNA mismatch repair. May act as a 'molecular matchmaker', a protein that promotes the formation of a stable complex between two or more DNA-binding proteins in an ATP-dependent manner without itself being part of a final effector complex. The chain is DNA mismatch repair protein MutL from Streptococcus pneumoniae serotype 2 (strain D39 / NCTC 7466).